We begin with the raw amino-acid sequence, 126 residues long: Fluoride-specific ion channel FluC (126 aa).

4 consecutive transmembrane segments (helical) span residues leucine 4–tryptophan 24, glycine 36–leucine 56, leucine 67–tyrosine 85, and alanine 101–valine 121. Positions 75 and 78 each coordinate Na(+).

This sequence belongs to the fluoride channel Fluc/FEX (TC 1.A.43) family.

It is found in the cell inner membrane. The catalysed reaction is fluoride(in) = fluoride(out). With respect to regulation, na(+) is not transported, but it plays an essential structural role and its presence is essential for fluoride channel function. Its function is as follows. Fluoride-specific ion channel. Important for reducing fluoride concentration in the cell, thus reducing its toxicity. This chain is Fluoride-specific ion channel FluC, found in Anaeromyxobacter sp. (strain K).